Reading from the N-terminus, the 504-residue chain is ATP synthase subunit alpha, chloroplastic (504 aa).

Residue 170 to 177 (GDRQTGKT) participates in ATP binding.

Belongs to the ATPase alpha/beta chains family. As to quaternary structure, F-type ATPases have 2 components, CF(1) - the catalytic core - and CF(0) - the membrane proton channel. CF(1) has five subunits: alpha(3), beta(3), gamma(1), delta(1), epsilon(1). CF(0) has four main subunits: a, b, b' and c.

The protein localises to the plastid. The protein resides in the chloroplast thylakoid membrane. The enzyme catalyses ATP + H2O + 4 H(+)(in) = ADP + phosphate + 5 H(+)(out). Functionally, produces ATP from ADP in the presence of a proton gradient across the membrane. The alpha chain is a regulatory subunit. The sequence is that of ATP synthase subunit alpha, chloroplastic from Hordeum vulgare (Barley).